The following is a 277-amino-acid chain: Bleomycin hydrolase (277 aa).

The active site involves C53.

It belongs to the peptidase C1 family. Homohexamer. Interacts with NUDT12 (via ANK repeats).

Its subcellular location is the cytoplasm. The protein localises to the cytoplasmic granule. It carries out the reaction Inactivates bleomycin B2 (a cytotoxic glycometallopeptide) by hydrolysis of a carboxyamide bond of beta-aminoalanine, but also shows general aminopeptidase activity. The specificity varies somewhat with source, but amino acid arylamides of Met, Leu and Ala are preferred.. Its activity is regulated as follows. Strongly inhibited by leupeptin, puromycin, NEM, and divalent cations. The normal physiological role of BLM hydrolase is unknown, but it catalyzes the inactivation of the antitumor drug BLM (a glycopeptide) by hydrolyzing the carboxamide bond of its B-aminoalaninamide moiety thus protecting normal and malignant cells from BLM toxicity. The chain is Bleomycin hydrolase (BLMH) from Oryctolagus cuniculus (Rabbit).